The following is a 269-amino-acid chain: uncharacterized protein (269 aa).

Positions 1–16 (MTDVPSKPPQTTPPPK) are enriched in pro residues. 2 disordered regions span residues 1–110 (MTDV…TISG) and 157–269 (ILQQ…PTIQ). Residues 21–45 (APTTIFSSPPQLPDRSSLNISHTAS) show a composition bias toward polar residues. The span at 46–58 (TPTLTPTPLQQQQ) shows a compositional bias: low complexity. Residues 80-93 (SFSNSPNRQTQSFI) show a composition bias toward polar residues. Over residues 159 to 181 (QQPQQSHSPQQQQQQHTPNHQQP) the composition is skewed to low complexity. The span at 182-195 (LSPQQQKDLAQKRS) shows a compositional bias: polar residues. A compositionally biased stretch (pro residues) spans 198-213 (PLPPRPNKNRPLPTPI).

This is an uncharacterized protein from Dictyostelium discoideum (Social amoeba).